The primary structure comprises 145 residues: Fluoride-specific ion channel FluC 2 (145 aa).

4 helical membrane passes run 16–36, 42–62, 80–100, and 113–133; these read MLLV…LSAA, VISV…GWLL, LFAG…AVDT, and ILYA…GIAL. Na(+) contacts are provided by Gly-88 and Thr-91.

It belongs to the fluoride channel Fluc/FEX (TC 1.A.43) family.

The protein localises to the cell membrane. It carries out the reaction fluoride(in) = fluoride(out). Na(+) is not transported, but it plays an essential structural role and its presence is essential for fluoride channel function. Fluoride-specific ion channel. Important for reducing fluoride concentration in the cell, thus reducing its toxicity. The sequence is that of Fluoride-specific ion channel FluC 2 from Leifsonia xyli subsp. xyli (strain CTCB07).